The primary structure comprises 125 residues: Type-4 ice-structuring protein (125 aa).

The first 20 residues, 1–20 (MKYTLIAAIVVLALAQGTLA), serve as a signal peptide directing secretion.

Belongs to the apolipoprotein A1/A4/E family.

The protein localises to the secreted. In terms of biological role, antifreeze proteins lower the blood freezing point. The chain is Type-4 ice-structuring protein from Gadus morhua (Atlantic cod).